Here is a 343-residue protein sequence, read N- to C-terminus: Cell invasion protein SipD (343 aa).

Residues 1–26 (MLNIQNYSASPHPGIVAERPQTPSAS) are disordered. Residues 295 to 322 (KAQEENMKTTLQTLTQKYSNANSLYDNL) are a coiled coil.

This sequence belongs to the invasin protein D family.

It localises to the secreted. Functionally, required for translocation of effector proteins via the type III secretion system SPI-1, which is essential for an efficient bacterial internalization. Probably acts by modulating the secretion of SipA, SipB, and SipC. This is Cell invasion protein SipD (sipD) from Salmonella typhimurium (strain LT2 / SGSC1412 / ATCC 700720).